A 562-amino-acid polypeptide reads, in one-letter code: Probable tRNA (uracil-O(2)-)-methyltransferase (562 aa).

Residues 520–546 form a disordered region; sequence VSRRQQTNPKKQEATNRPKQPCWMSLN. A C3H1-type zinc finger spans residues 535 to 562; the sequence is NRPKQPCWMSLNHPDGCPLGPESCRYLH.

It belongs to the TRM44 family.

The protein localises to the cytoplasm. It catalyses the reaction uridine(44) in tRNA(Ser) + S-adenosyl-L-methionine = 2'-O-methyluridine(44) in tRNA(Ser) + S-adenosyl-L-homocysteine + H(+). Its function is as follows. Probable adenosyl-L-methionine (AdoMet)-dependent tRNA (uracil-O(2)-)-methyltransferase. This chain is Probable tRNA (uracil-O(2)-)-methyltransferase, found in Caenorhabditis briggsae.